Reading from the N-terminus, the 377-residue chain is uncharacterized protein (377 aa).

2 helical membrane passes run 71–91 (IIAT…LVGS) and 140–160 (AEAA…PTLF).

Its subcellular location is the membrane. This is an uncharacterized protein from Coxiella burnetii (strain RSA 493 / Nine Mile phase I).